The primary structure comprises 78 residues: Large ribosomal subunit protein bL28 (78 aa).

The segment at 1–21 (MSRVCQVTGKRPMVGNNRSHA) is disordered.

Belongs to the bacterial ribosomal protein bL28 family.

The polypeptide is Large ribosomal subunit protein bL28 (Shewanella halifaxensis (strain HAW-EB4)).